Consider the following 174-residue polypeptide: MAAAAELSLLEKSLGLSKGNKYSAQGERQIPVLQTNNGPSLTGLTTIAAHLVKQANKEYLLGSTAEEKAIVQQWLEYRVTQVDGHSSKNDIHTLLKDLNSYLEDKVYLTGYNFTLADILLYYGLHRFIVDLTVQEKEKYLNVSRWFCHIQHYPGIRQHLSSVVFIKNRLYTNSH.

Ala-2 is modified (N-acetylalanine). Residues 2–56 (AAAAELSLLEKSLGLSKGNKYSAQGERQIPVLQTNNGPSLTGLTTIAAHLVKQAN) form an N-terminal region. Residues 50–173 (HLVKQANKEY…FIKNRLYTNS (124 aa)) enclose the GST C-terminal domain. Residues 57 to 63 (KEYLLGS) form a linker region. The tract at residues 64–152 (TAEEKAIVQQ…SRWFCHIQHY (89 aa)) is C-terminal. Residue Lys-138 is modified to N6-acetyllysine. A coiled-coil region spans residues 153–169 (PGIRQHLSSVVFIKNRL).

Part of a multisubunit complex that groups tRNA ligases for Arg (RARS1), Asp (DARS1), Gln (QARS1), Ile (IARS1), Leu (LARS1), Lys (KARS1), Met (MARS1) the bifunctional ligase for Glu and Pro (EPRS1) and the auxiliary subunits AIMP1/p43, AIMP2/p38 and EEF1E1/p18. Can interact simultaneously with MARS1 and EPRS1. Forms a linear complex that contains MARS1, EEF1E1, EPRS1 and AIMP2 that is at the core of the multisubunit complex. Interacts with ATM and ATR. The interaction with ATM, which takes place independently of TP53, is induced by DNA damage that may occur during genotoxic stress or cell growth. The interaction with ATR is enhanced by UV irradiation. Down-regulated in various cancer tissues.

It localises to the cytoplasm. The protein resides in the cytosol. It is found in the nucleus. In terms of biological role, positive modulator of ATM response to DNA damage. The sequence is that of Eukaryotic translation elongation factor 1 epsilon-1 (EEF1E1) from Homo sapiens (Human).